The chain runs to 199 residues: Recombination protein RecR (199 aa).

The segment at 57 to 72 (CPICGNITEKEVCDIC) adopts a C4-type zinc-finger fold. In terms of domain architecture, Toprim spans 80 to 176 (TTIMVVEQPK…KVTRLAAGLS (97 aa)).

It belongs to the RecR family.

May play a role in DNA repair. It seems to be involved in an RecBC-independent recombinational process of DNA repair. It may act with RecF and RecO. The chain is Recombination protein RecR from Lactobacillus helveticus (strain DPC 4571).